The primary structure comprises 217 residues: Pyridoxine/pyridoxamine 5'-phosphate oxidase (217 aa).

Substrate contacts are provided by residues 13-16 and K71; that span reads RREY. FMN is bound by residues 66 to 71, 81 to 82, R87, K88, and Q110; these read RIVLLK and YT. Substrate is bound by residues Y128, R132, and S136. FMN is bound by residues 145 to 146 and W190; that span reads QS. Position 196 to 198 (196 to 198) interacts with substrate; it reads RLH. R200 lines the FMN pocket.

It belongs to the pyridoxamine 5'-phosphate oxidase family. As to quaternary structure, homodimer. FMN is required as a cofactor.

The catalysed reaction is pyridoxamine 5'-phosphate + O2 + H2O = pyridoxal 5'-phosphate + H2O2 + NH4(+). It carries out the reaction pyridoxine 5'-phosphate + O2 = pyridoxal 5'-phosphate + H2O2. It participates in cofactor metabolism; pyridoxal 5'-phosphate salvage; pyridoxal 5'-phosphate from pyridoxamine 5'-phosphate: step 1/1. The protein operates within cofactor metabolism; pyridoxal 5'-phosphate salvage; pyridoxal 5'-phosphate from pyridoxine 5'-phosphate: step 1/1. In terms of biological role, catalyzes the oxidation of either pyridoxine 5'-phosphate (PNP) or pyridoxamine 5'-phosphate (PMP) into pyridoxal 5'-phosphate (PLP). This Serratia proteamaculans (strain 568) protein is Pyridoxine/pyridoxamine 5'-phosphate oxidase.